The following is a 73-amino-acid chain: Plasticin-A1 (73 aa).

The first 22 residues, 1-22, serve as a signal peptide directing secretion; it reads MAFLKKSLFLVLFLAIVPLSIC. Positions 23–42 are excised as a propeptide; the sequence is EEEKREEENEEKQEDDDQSE. Residues 25–45 are disordered; it reads EKREEENEEKQEDDDQSEKRG. Residues 30–40 show a composition bias toward acidic residues; sequence ENEEKQEDDDQ. Gly70 is modified (glycine amide). The propeptide occupies 72-73; sequence ES.

Belongs to the frog skin active peptide (FSAP) family. Plasticin subfamily. As to expression, expressed by the skin glands.

It localises to the secreted. It is found in the target cell membrane. Functionally, peptide with no antimicrobial activity. May act in synergy with cationic peptides by enhancing their activity. Has a moderate hemolytic activity. The sequence is that of Plasticin-A1 from Agalychnis annae (Blue-sided leaf frog).